Reading from the N-terminus, the 289-residue chain is Diaminopimelate epimerase (289 aa).

Substrate is bound by residues N15 and N76. The active-site Proton donor is the C85. Substrate-binding positions include 86-87 (GN), N158, N191, and 209-210 (ER). C218 acts as the Proton acceptor in catalysis. Residue 219 to 220 (GT) coordinates substrate.

It belongs to the diaminopimelate epimerase family. In terms of assembly, homodimer.

It is found in the cytoplasm. The catalysed reaction is (2S,6S)-2,6-diaminopimelate = meso-2,6-diaminopimelate. Its pathway is amino-acid biosynthesis; L-lysine biosynthesis via DAP pathway; DL-2,6-diaminopimelate from LL-2,6-diaminopimelate: step 1/1. Catalyzes the stereoinversion of LL-2,6-diaminopimelate (L,L-DAP) to meso-diaminopimelate (meso-DAP), a precursor of L-lysine and an essential component of the bacterial peptidoglycan. This chain is Diaminopimelate epimerase, found in Streptomyces coelicolor (strain ATCC BAA-471 / A3(2) / M145).